Reading from the N-terminus, the 283-residue chain is Acetyl-coenzyme A carboxylase carboxyl transferase subunit beta (283 aa).

The 255-residue stretch at L29–Y283 folds into the CoA carboxyltransferase N-terminal domain. The Zn(2+) site is built by C33, C36, C51, and C54. The segment at C33–C54 adopts a C4-type zinc-finger fold.

This sequence belongs to the AccD/PCCB family. Acetyl-CoA carboxylase is a heterohexamer composed of biotin carboxyl carrier protein (AccB), biotin carboxylase (AccC) and two subunits each of ACCase subunit alpha (AccA) and ACCase subunit beta (AccD). The cofactor is Zn(2+).

It localises to the cytoplasm. The catalysed reaction is N(6)-carboxybiotinyl-L-lysyl-[protein] + acetyl-CoA = N(6)-biotinyl-L-lysyl-[protein] + malonyl-CoA. It functions in the pathway lipid metabolism; malonyl-CoA biosynthesis; malonyl-CoA from acetyl-CoA: step 1/1. Its function is as follows. Component of the acetyl coenzyme A carboxylase (ACC) complex. Biotin carboxylase (BC) catalyzes the carboxylation of biotin on its carrier protein (BCCP) and then the CO(2) group is transferred by the transcarboxylase to acetyl-CoA to form malonyl-CoA. This chain is Acetyl-coenzyme A carboxylase carboxyl transferase subunit beta, found in Latilactobacillus sakei subsp. sakei (strain 23K) (Lactobacillus sakei subsp. sakei).